A 309-amino-acid chain; its full sequence is Tagatose-6-phosphate kinase (309 aa).

The protein belongs to the carbohydrate kinase PfkB family. LacC subfamily.

The catalysed reaction is D-tagatofuranose 6-phosphate + ATP = D-tagatofuranose 1,6-bisphosphate + ADP + H(+). Its pathway is carbohydrate metabolism; D-tagatose 6-phosphate degradation; D-glyceraldehyde 3-phosphate and glycerone phosphate from D-tagatose 6-phosphate: step 1/2. In Streptococcus pneumoniae (strain 70585), this protein is Tagatose-6-phosphate kinase.